The chain runs to 440 residues: General transcription factor IIE subunit 1 (440 aa).

Ala-2 is modified (N-acetylalanine). Residues 14 to 104 (LKRLAKYVIR…NYRTLVNVVK (91 aa)) enclose the HTH TFE/IIEalpha-type domain. Residue Lys-67 is modified to N6-acetyllysine. Zn(2+) contacts are provided by Cys-129, Cys-132, Cys-154, and Cys-157. Residues 129 to 157 (CPVCCSTFTDLEANQLFDPMTGTFRCTFC) form a C4-type zinc finger. A Phosphoserine modification is found at Ser-268. Positions 333–353 (SSVTAGSVGAAAPVTAANGSD) are enriched in low complexity. The interval 333 to 395 (SSVTAGSVGA…EEFEEVADDP (63 aa)) is disordered. Composition is skewed to acidic residues over residues 354–364 (SESETSESDDD) and 381–393 (EDEE…EVAD).

The protein belongs to the TFIIE alpha subunit family. Tetramer of two alpha and two beta chains. Interacts with TAF6/TAFII80. Interacts with ATF7IP. Interacts with SND1. Part of TBP-based Pol II pre-initiation complex (PIC), in which Pol II core assembles with general transcription factors and other specific initiation factors including GTF2E1, GTF2E2, GTF2F1, GTF2F2, TCEA1, ERCC2, ERCC3, GTF2H2, GTF2H3, GTF2H4, GTF2H5, GTF2A1, GTF2A2, GTF2B and TBP; this large multi-subunit PIC complex mediates DNA unwinding and targets Pol II core to the transcription start site where the first phosphodiester bond forms.

It is found in the nucleus. Its function is as follows. Recruits TFIIH to the initiation complex and stimulates the RNA polymerase II C-terminal domain kinase and DNA-dependent ATPase activities of TFIIH. Both TFIIH and TFIIE are required for promoter clearance by RNA polymerase. This is General transcription factor IIE subunit 1 (Gtf2e1) from Mus musculus (Mouse).